A 145-amino-acid chain; its full sequence is Hemoglobin subunit beta (145 aa).

Residues 1 to 145 (MLTAEEKAAV…VANALAHRYH (145 aa)) form the Globin domain. The residue at position 11 (threonine 11) is a Phosphothreonine. At serine 43 the chain carries Phosphoserine. Lysine 58 carries the N6-acetyllysine modification. Histidine 62 lines the heme b pocket. Lysine 81 is modified (N6-acetyllysine). Histidine 91 serves as a coordination point for heme b. Cysteine 92 is modified (S-nitrosocysteine).

It belongs to the globin family. As to quaternary structure, heterotetramer of two alpha chains and two beta chains. In terms of tissue distribution, red blood cells.

In terms of biological role, involved in oxygen transport from the lung to the various peripheral tissues. Functions as an endogenous inhibitor of enkephalin-degrading enzymes such as DPP3, and may thereby play a role as a regulator of pain and inflammation. In Bos taurus (Bovine), this protein is Hemoglobin subunit beta (HBB).